We begin with the raw amino-acid sequence, 180 residues long: Cytidylate kinase (180 aa).

7–15 (GLPGSGTST) lines the ATP pocket.

Belongs to the cytidylate kinase family. Type 2 subfamily.

It is found in the cytoplasm. The enzyme catalyses CMP + ATP = CDP + ADP. It catalyses the reaction dCMP + ATP = dCDP + ADP. This Methanosarcina mazei (strain ATCC BAA-159 / DSM 3647 / Goe1 / Go1 / JCM 11833 / OCM 88) (Methanosarcina frisia) protein is Cytidylate kinase (cmk).